The following is a 290-amino-acid chain: Protease HtpX (290 aa).

Helical transmembrane passes span 4–24 (IFLFLATNLAVLVIASITLKL) and 36–56 (GSLLVFCAVFGFAGSLISLFI). Zn(2+) is bound at residue His-142. The active site involves Glu-143. Zn(2+) is bound at residue His-146. The next 2 membrane-spanning stretches (helical) occupy residues 150 to 170 (GDMVTLALIQGVVNTFVMFFA) and 193 to 213 (FVATIFAELVLGILASIIVMW). Glu-219 is a binding site for Zn(2+).

It belongs to the peptidase M48B family. The cofactor is Zn(2+).

The protein localises to the cell inner membrane. The chain is Protease HtpX from Stutzerimonas stutzeri (strain A1501) (Pseudomonas stutzeri).